Here is a 149-residue protein sequence, read N- to C-terminus: MQIDSIDFQILQLLNKNARIQWKEIGEKIHMTGQAVGNRIKKMEDNGIIKAYSIVVDELKMGFSFTAFVFFFMNAYMHDDLLKFIATRNEISEAHRVSGDACYLLKVTVHSQEVLNHLLNDLLKYGNYQLYLSIKEVKKHYNTSLMSDE.

The HTH asnC-type domain maps to 3–64 (IDSIDFQILQ…VVDELKMGFS (62 aa)). The H-T-H motif DNA-binding region spans 22–41 (WKEIGEKIHMTGQAVGNRIK).

Negative regulation of glyA transcription and kinB-dependent sporulation. The sequence is that of HTH-type transcriptional regulator LrpB (lrpB) from Bacillus subtilis (strain 168).